The following is a 277-amino-acid chain: 3-methyl-2-oxobutanoate hydroxymethyltransferase (277 aa).

Mg(2+)-binding residues include Asp-43 and Asp-82. Residues 43–44 (DS), Asp-82, and Lys-112 each bind 3-methyl-2-oxobutanoate. Glu-114 is a Mg(2+) binding site. The active-site Proton acceptor is Glu-181.

Belongs to the PanB family. In terms of assembly, homodecamer; pentamer of dimers. Requires Mg(2+) as cofactor.

Its subcellular location is the cytoplasm. It carries out the reaction 3-methyl-2-oxobutanoate + (6R)-5,10-methylene-5,6,7,8-tetrahydrofolate + H2O = 2-dehydropantoate + (6S)-5,6,7,8-tetrahydrofolate. The protein operates within cofactor biosynthesis; (R)-pantothenate biosynthesis; (R)-pantoate from 3-methyl-2-oxobutanoate: step 1/2. Its function is as follows. Catalyzes the reversible reaction in which hydroxymethyl group from 5,10-methylenetetrahydrofolate is transferred onto alpha-ketoisovalerate to form ketopantoate. In Bacillus velezensis (strain DSM 23117 / BGSC 10A6 / LMG 26770 / FZB42) (Bacillus amyloliquefaciens subsp. plantarum), this protein is 3-methyl-2-oxobutanoate hydroxymethyltransferase.